We begin with the raw amino-acid sequence, 504 residues long: DNA-binding protein reb1 (504 aa).

The disordered stretch occupies residues 30–51 (DFDDFPLNKGLKTNNNDYSGSI). 2 consecutive HTH myb-type domains span residues 308–361 (NPFE…RFGD) and 362–422 (KLKR…KAAS). DNA-binding regions (H-T-H motif) lie at residues 335–357 (WTKI…RDVV) and 395–418 (WTLV…QQLT).

It is found in the nucleus. Its function is as follows. DNA-binding protein that recognizes sites within both the enhancer and the promoter of rRNA transcription, as well as upstream of many genes transcribed by RNA polymerase II. Has a role in the termination of RNA polymerase I catalyzed transcription. This chain is DNA-binding protein reb1 (reb1), found in Schizosaccharomyces pombe (strain 972 / ATCC 24843) (Fission yeast).